The primary structure comprises 366 residues: Putative neutrophil cytosol factor 1C (366 aa).

In terms of domain architecture, PX spans 1-101; sequence MYMFLVKWQD…DFFKVRPDDL (101 aa). SH3 domains lie at 132 to 191 and 202 to 261; these read IILQ…PLDS and YAGE…KSGQ. The disordered stretch occupies residues 261-366; that stretch reads QDVSQAQRQI…STKRKLASAV (106 aa). Residues Ser-279 and Ser-280 each carry the phosphoserine modification. Basic residues predominate over residues 285-294; it reads HSIHQRSRKR. A phosphoserine mark is found at Ser-296, Ser-304, Ser-321, and Ser-324.

The protein localises to the cytoplasm. Its function is as follows. May be required for activation of the latent NADPH oxidase (necessary for superoxide production). In Homo sapiens (Human), this protein is Putative neutrophil cytosol factor 1C (NCF1C).